We begin with the raw amino-acid sequence, 213 residues long: Thymidylate kinase (213 aa).

10 to 17 (GLEGAGKT) serves as a coordination point for ATP.

This sequence belongs to the thymidylate kinase family.

The enzyme catalyses dTMP + ATP = dTDP + ADP. Its function is as follows. Phosphorylation of dTMP to form dTDP in both de novo and salvage pathways of dTTP synthesis. The sequence is that of Thymidylate kinase from Escherichia coli O81 (strain ED1a).